Consider the following 370-residue polypeptide: Protein-glutamate methylesterase/protein-glutamine glutaminase 3 (370 aa).

In terms of domain architecture, Response regulatory spans 3–119 (KVLIVDDSAL…SLNVSRIERE (117 aa)). The residue at position 53 (Asp-53) is a 4-aspartylphosphate. A CheB-type methylesterase domain is found at 166-360 (SLTEIGVVLI…GQLNAWMSRT (195 aa)). Residues Ser-178, His-205, and Asp-302 contribute to the active site.

Belongs to the CheB family. Post-translationally, phosphorylated by CheA. Phosphorylation of the N-terminal regulatory domain activates the methylesterase activity.

It is found in the cytoplasm. The catalysed reaction is [protein]-L-glutamate 5-O-methyl ester + H2O = L-glutamyl-[protein] + methanol + H(+). It catalyses the reaction L-glutaminyl-[protein] + H2O = L-glutamyl-[protein] + NH4(+). Functionally, involved in chemotaxis. Part of a chemotaxis signal transduction system that modulates chemotaxis in response to various stimuli. Catalyzes the demethylation of specific methylglutamate residues introduced into the chemoreceptors (methyl-accepting chemotaxis proteins or MCP) by CheR. Also mediates the irreversible deamidation of specific glutamine residues to glutamic acid. This is Protein-glutamate methylesterase/protein-glutamine glutaminase 3 from Rhodospirillum rubrum (strain ATCC 11170 / ATH 1.1.1 / DSM 467 / LMG 4362 / NCIMB 8255 / S1).